Consider the following 484-residue polypeptide: Dolichyl-P-Man:Man5GlcNAc2-PP-dolichol alpha-1,3-mannosyltransferase l(2)not2 (484 aa).

Residues 1–43 (MAPPKAASHRPAVRRKKSGTLVDSILDKYLNVRFFKYLLLEPA) are Cytoplasmic-facing. Residues 44–64 (ALPIVGLFVLLAELVINVVVI) traverse the membrane as a helical segment. Residues 65-97 (QRVPYTEIDWVAYMQECEGFLNGTTNYSLLRGD) are Lumenal-facing. The chain crosses the membrane as a helical span at residues 98–118 (TGPLVYPAAFVYIYSALYYVT). At 119–125 (SHGTNVR) the chain is on the cytoplasmic side. Residues 126 to 146 (LAQYIFAGIYLLQLALVLRLY) traverse the membrane as a helical segment. At 147–171 (SKSRKVPPYVLVLSAFTSYRIHSIY) the chain is on the lumenal side. A helical transmembrane segment spans residues 172 to 192 (VLRLFNDPVAVLLLYAALNLF). Residues 193–211 (LDRRWTLGSTFFSLAVGVK) are Cytoplasmic-facing. The helical transmembrane segment at 212–232 (MNILLFAPALLLFYLANLGLL) threads the bilayer. Residue arginine 233 is a topological domain, lumenal. Residues 234-254 (TILQLAVCGVIQLLLGAPFLL) form a helical membrane-spanning segment. The Cytoplasmic portion of the chain corresponds to 255 to 294 (THPVEYLRGSFDLGRIFEHKWTVNYRFLSRDVFENRTFHV). The helical transmembrane segment at 295 to 315 (SLLGLHLLLLLAFAKPTWTFF) threads the bilayer. Residues 316-403 (QSYVRLRRIE…YGIHFDRCTQ (88 aa)) lie on the Lumenal side of the membrane. The helical transmembrane segment at 404 to 424 (LALLPFFLCNLVGVACSRSLH) threads the bilayer. At 425-426 (YQ) the chain is on the cytoplasmic side. A helical membrane pass occupies residues 427-447 (FYVWYFHSLPYLAWSTPYSLG). Over 448-484 (VRCLILGLIEYCWNTYPSTNFSSAALHFTHIIPPYQL) the chain is Lumenal.

Belongs to the glycosyltransferase ALG3 family.

Its subcellular location is the endoplasmic reticulum membrane. The catalysed reaction is an alpha-D-Man-(1-&gt;2)-alpha-D-Man-(1-&gt;2)-alpha-D-Man-(1-&gt;3)-[alpha-D-Man-(1-&gt;6)]-beta-D-Man-(1-&gt;4)-beta-D-GlcNAc-(1-&gt;4)-alpha-D-GlcNAc-diphospho-di-trans,poly-cis-dolichol + a di-trans,poly-cis-dolichyl beta-D-mannosyl phosphate = an alpha-D-Man-(1-&gt;2)-alpha-D-Man-(1-&gt;2)-alpha-D-Man-(1-&gt;3)-[alpha-D-Man-(1-&gt;3)-alpha-D-Man-(1-&gt;6)]-beta-D-Man-(1-&gt;4)-beta-D-GlcNAc-(1-&gt;4)-alpha-D-GlcNAc-diphospho-di-trans,poly-cis-dolichol + a di-trans,poly-cis-dolichyl phosphate + H(+). Its pathway is protein modification; protein glycosylation. Probable alpha-1,3-mannosyltransferase involved in the N-glycosylation pathway. Involved in glycosylation of the TNF receptor grnd, regulating its ligand affinity. Required for normal epithelial growth and architecture. Suppressor of JNK-dependent intestinal stem cell proliferation. The protein is Dolichyl-P-Man:Man5GlcNAc2-PP-dolichol alpha-1,3-mannosyltransferase l(2)not2 of Drosophila melanogaster (Fruit fly).